Reading from the N-terminus, the 242-residue chain is Probable 2-phosphosulfolactate phosphatase (242 aa).

This sequence belongs to the ComB family. Mg(2+) serves as cofactor.

The catalysed reaction is (2R)-O-phospho-3-sulfolactate + H2O = (2R)-3-sulfolactate + phosphate. The sequence is that of Probable 2-phosphosulfolactate phosphatase from Parasynechococcus marenigrum (strain WH8102).